We begin with the raw amino-acid sequence, 338 residues long: Anthranilate phosphoribosyltransferase (338 aa).

5-phospho-alpha-D-ribose 1-diphosphate-binding positions include Gly81, 84–85 (GD), Thr89, 91–94 (NIST), 109–117 (KHGNRNLSS), and Ala121. Gly81 contributes to the anthranilate binding site. Residue Ser93 participates in Mg(2+) binding. Asn112 contributes to the anthranilate binding site. Arg167 is an anthranilate binding site. 2 residues coordinate Mg(2+): Asp226 and Glu227.

This sequence belongs to the anthranilate phosphoribosyltransferase family. As to quaternary structure, homodimer. It depends on Mg(2+) as a cofactor.

It catalyses the reaction N-(5-phospho-beta-D-ribosyl)anthranilate + diphosphate = 5-phospho-alpha-D-ribose 1-diphosphate + anthranilate. It participates in amino-acid biosynthesis; L-tryptophan biosynthesis; L-tryptophan from chorismate: step 2/5. Catalyzes the transfer of the phosphoribosyl group of 5-phosphorylribose-1-pyrophosphate (PRPP) to anthranilate to yield N-(5'-phosphoribosyl)-anthranilate (PRA). This Cereibacter sphaeroides (strain ATCC 17023 / DSM 158 / JCM 6121 / CCUG 31486 / LMG 2827 / NBRC 12203 / NCIMB 8253 / ATH 2.4.1.) (Rhodobacter sphaeroides) protein is Anthranilate phosphoribosyltransferase.